A 415-amino-acid chain; its full sequence is Methylaspartate ammonia-lyase 2 (415 aa).

Q173 is a binding site for (2S,3S)-3-methyl-L-aspartate. Mg(2+)-binding residues include D238, E273, and D307. Residue Q329 participates in (2S,3S)-3-methyl-L-aspartate binding. K331 functions as the Proton acceptor in the catalytic mechanism. Residue 360 to 361 participates in (2S,3S)-3-methyl-L-aspartate binding; sequence TC.

This sequence belongs to the methylaspartate ammonia-lyase family. In terms of assembly, homodimer. Mg(2+) is required as a cofactor.

The enzyme catalyses (2S,3S)-3-methyl-L-aspartate = mesaconate + NH4(+). It participates in amino-acid degradation; L-glutamate degradation via mesaconate pathway; acetate and pyruvate from L-glutamate: step 2/4. Involved in the methylaspartate cycle. Catalyzes the formation of the alpha,beta-unsaturated bond by the reversible anti elimination of ammonia from L-threo-beta-methylaspartate (L-threo-(2S,3S)-3-methylaspartate) to give mesaconate. This chain is Methylaspartate ammonia-lyase 2, found in Carboxydothermus hydrogenoformans (strain ATCC BAA-161 / DSM 6008 / Z-2901).